A 581-amino-acid chain; its full sequence is Arginine--tRNA ligase (581 aa).

The 'HIGH' region signature appears at 126–136 (PNLAKEMHVGH).

The protein belongs to the class-I aminoacyl-tRNA synthetase family. In terms of assembly, monomer.

The protein localises to the cytoplasm. It carries out the reaction tRNA(Arg) + L-arginine + ATP = L-arginyl-tRNA(Arg) + AMP + diphosphate. The sequence is that of Arginine--tRNA ligase from Shewanella denitrificans (strain OS217 / ATCC BAA-1090 / DSM 15013).